The following is a 273-amino-acid chain: Rhamnulose-1-phosphate aldolase (273 aa).

The active site involves glutamate 117. Zn(2+) is bound by residues histidine 140, histidine 142, and histidine 211.

Belongs to the aldolase class II family. RhaD subfamily. Requires Zn(2+) as cofactor.

Its subcellular location is the cytoplasm. It carries out the reaction L-rhamnulose 1-phosphate = (S)-lactaldehyde + dihydroxyacetone phosphate. The protein operates within carbohydrate degradation; L-rhamnose degradation; glycerone phosphate from L-rhamnose: step 3/3. Its function is as follows. Catalyzes the reversible cleavage of L-rhamnulose-1-phosphate to dihydroxyacetone phosphate (DHAP) and L-lactaldehyde. The protein is Rhamnulose-1-phosphate aldolase of Listeria monocytogenes serotype 4a (strain HCC23).